Here is a 514-residue protein sequence, read N- to C-terminus: ATP synthase subunit alpha (514 aa).

170 to 177 (GDRQIGKT) contacts ATP.

The protein belongs to the ATPase alpha/beta chains family. As to quaternary structure, F-type ATPases have 2 components, CF(1) - the catalytic core - and CF(0) - the membrane proton channel. CF(1) has five subunits: alpha(3), beta(3), gamma(1), delta(1), epsilon(1). CF(0) has three main subunits: a(1), b(2) and c(9-12). The alpha and beta chains form an alternating ring which encloses part of the gamma chain. CF(1) is attached to CF(0) by a central stalk formed by the gamma and epsilon chains, while a peripheral stalk is formed by the delta and b chains.

It is found in the cell inner membrane. The enzyme catalyses ATP + H2O + 4 H(+)(in) = ADP + phosphate + 5 H(+)(out). In terms of biological role, produces ATP from ADP in the presence of a proton gradient across the membrane. The alpha chain is a regulatory subunit. This Alcanivorax borkumensis (strain ATCC 700651 / DSM 11573 / NCIMB 13689 / SK2) protein is ATP synthase subunit alpha.